Consider the following 2512-residue polypeptide: Fatty acid synthase (2512 aa).

Position 2 is an N-acetylglutamate (Glu-2). A Ketosynthase family 3 (KS3) domain is found at 2–406 (EDVVIAGIAG…GSNAHVILRP (405 aa)). Residues Cys-161, His-293, and His-331 each act as for beta-ketoacyl synthase activity in the active site. The tract at residues 427–815 (GRTQEAVEIL…GINVLGNNLF (389 aa)) is acyl and malonyl transferases. The active-site For acyl/malonyl transferase activity is the Ser-580. Residues 646-647 (DT), Phe-670, and Arg-772 contribute to the an acyl-CoA site. Positions 844 to 967 (PKAEDFPSGS…ISLLENDALK (124 aa)) are N-terminal hotdog fold. The PKS/mFAS DH domain maps to 844 to 1111 (PKAEDFPSGS…ASVAPRRQQE (268 aa)). His-878 serves as the catalytic Proton acceptor; for dehydratase activity. A C-terminal hotdog fold region spans residues 984–1111 (AKSGLLMEDV…ASVAPRRQQE (128 aa)). The active-site Proton donor; for dehydratase activity is Asp-1034. Cys-1475 bears the S-nitrosocysteine mark. Residues 1638-1866 (WEVPENWTLE…MIKIQEEEKQ (229 aa)) are enoyl reductase. 1675–1692 (VLIHSGSGGVGQAAIAIA) contributes to the NADP(+) binding site. N6-(pyridoxal phosphate)lysine is present on Lys-1708. The segment at 1867–2119 (YPLRSEPVKL…SFVLAEKVSV (253 aa)) is beta-ketoacyl reductase. Residue 1889–1904 (SYIITGGLGGFGLELA) coordinates NADP(+). Residue Cys-2093 is modified to S-nitrosocysteine. Residues 2120 to 2200 (KSEGGSQRDL…ELSSKTGTAE (81 aa)) enclose the Carrier domain. Ser-2158 carries the post-translational modification O-(pantetheine 4'-phosphoryl)serine. Residues 2209–2511 (KTGPGEPPKL…LAEPRVSVRE (303 aa)) form a thioesterase region. Residues Ser-2309 and His-2482 each act as for thioesterase activity in the active site.

Homodimer which is arranged in a head to tail fashion. In terms of processing, S-nitrosylation of Fatty acid synthase at cysteine residues Cys-1475 or Cys-2093 is important for the enzyme dimerization. In adipocytes, S-nitrosylation of Fatty acid synthase occurs under physiological conditions and gradually increases during adipogenesis.

It carries out the reaction acetyl-CoA + n malonyl-CoA + 2n NADPH + 2n H(+) = a long-chain fatty acid + (n+1) CoA + n CO2 + 2n NADP(+).. The enzyme catalyses holo-[ACP] + acetyl-CoA = acetyl-[ACP] + CoA. It catalyses the reaction holo-[ACP] + malonyl-CoA = malonyl-[ACP] + CoA. The catalysed reaction is a fatty acyl-[ACP] + malonyl-[ACP] + H(+) = a 3-oxoacyl-[ACP] + holo-[ACP] + CO2. It carries out the reaction a (3R)-hydroxyacyl-[ACP] + NADP(+) = a 3-oxoacyl-[ACP] + NADPH + H(+). The enzyme catalyses a (3R)-hydroxyacyl-[ACP] = a (2E)-enoyl-[ACP] + H2O. It catalyses the reaction a 2,3-saturated acyl-[ACP] + NADP(+) = a (2E)-enoyl-[ACP] + NADPH + H(+). The catalysed reaction is hexadecanoyl-[ACP] + H2O = hexadecanoate + holo-[ACP] + H(+). It carries out the reaction acetyl-[ACP] + malonyl-[ACP] + H(+) = 3-oxobutanoyl-[ACP] + holo-[ACP] + CO2. The enzyme catalyses 3-oxobutanoyl-[ACP] + NADPH + H(+) = (3R)-hydroxybutanoyl-[ACP] + NADP(+). It catalyses the reaction (3R)-hydroxybutanoyl-[ACP] = (2E)-butenoyl-[ACP] + H2O. The catalysed reaction is (2E)-butenoyl-[ACP] + NADPH + H(+) = butanoyl-[ACP] + NADP(+). It carries out the reaction butanoyl-[ACP] + malonyl-[ACP] + H(+) = 3-oxohexanoyl-[ACP] + holo-[ACP] + CO2. The enzyme catalyses 3-oxohexanoyl-[ACP] + NADPH + H(+) = (3R)-hydroxyhexanoyl-[ACP] + NADP(+). It catalyses the reaction (3R)-hydroxyhexanoyl-[ACP] = (2E)-hexenoyl-[ACP] + H2O. The catalysed reaction is (2E)-hexenoyl-[ACP] + NADPH + H(+) = hexanoyl-[ACP] + NADP(+). It carries out the reaction hexanoyl-[ACP] + malonyl-[ACP] + H(+) = 3-oxooctanoyl-[ACP] + holo-[ACP] + CO2. The enzyme catalyses 3-oxooctanoyl-[ACP] + NADPH + H(+) = (3R)-hydroxyoctanoyl-[ACP] + NADP(+). It catalyses the reaction (3R)-hydroxyoctanoyl-[ACP] = (2E)-octenoyl-[ACP] + H2O. The catalysed reaction is (2E)-octenoyl-[ACP] + NADPH + H(+) = octanoyl-[ACP] + NADP(+). It carries out the reaction octanoyl-[ACP] + malonyl-[ACP] + H(+) = 3-oxodecanoyl-[ACP] + holo-[ACP] + CO2. The enzyme catalyses 3-oxodecanoyl-[ACP] + NADPH + H(+) = (3R)-hydroxydecanoyl-[ACP] + NADP(+). It catalyses the reaction (3R)-hydroxydecanoyl-[ACP] = (2E)-decenoyl-[ACP] + H2O. The catalysed reaction is (2E)-decenoyl-[ACP] + NADPH + H(+) = decanoyl-[ACP] + NADP(+). It carries out the reaction decanoyl-[ACP] + malonyl-[ACP] + H(+) = 3-oxododecanoyl-[ACP] + holo-[ACP] + CO2. The enzyme catalyses 3-oxododecanoyl-[ACP] + NADPH + H(+) = (3R)-hydroxydodecanoyl-[ACP] + NADP(+). It catalyses the reaction (3R)-hydroxydodecanoyl-[ACP] = (2E)-dodecenoyl-[ACP] + H2O. The catalysed reaction is (2E)-dodecenoyl-[ACP] + NADPH + H(+) = dodecanoyl-[ACP] + NADP(+). It carries out the reaction dodecanoyl-[ACP] + malonyl-[ACP] + H(+) = 3-oxotetradecanoyl-[ACP] + holo-[ACP] + CO2. The enzyme catalyses 3-oxotetradecanoyl-[ACP] + NADPH + H(+) = (3R)-hydroxytetradecanoyl-[ACP] + NADP(+). It catalyses the reaction (3R)-hydroxytetradecanoyl-[ACP] = (2E)-tetradecenoyl-[ACP] + H2O. The catalysed reaction is (2E)-tetradecenoyl-[ACP] + NADPH + H(+) = tetradecanoyl-[ACP] + NADP(+). It carries out the reaction tetradecanoyl-[ACP] + malonyl-[ACP] + H(+) = 3-oxohexadecanoyl-[ACP] + holo-[ACP] + CO2. The enzyme catalyses 3-oxohexadecanoyl-[ACP] + NADPH + H(+) = (3R)-hydroxyhexadecanoyl-[ACP] + NADP(+). It catalyses the reaction (3R)-hydroxyhexadecanoyl-[ACP] = (2E)-hexadecenoyl-[ACP] + H2O. The catalysed reaction is (2E)-hexadecenoyl-[ACP] + NADPH + H(+) = hexadecanoyl-[ACP] + NADP(+). It carries out the reaction hexadecanoyl-[ACP] + malonyl-[ACP] + H(+) = 3-oxooctadecanoyl-[ACP] + holo-[ACP] + CO2. The enzyme catalyses 3-oxooctadecanoyl-[ACP] + NADPH + H(+) = (3R)-hydroxyoctadecanoyl-[ACP] + NADP(+). It catalyses the reaction (3R)-hydroxyoctadecanoyl-[ACP] = (2E)-octadecenoyl-[ACP] + H2O. The catalysed reaction is (2E)-octadecenoyl-[ACP] + NADPH + H(+) = octadecanoyl-[ACP] + NADP(+). It carries out the reaction tetradecanoyl-[ACP] + H2O = tetradecanoate + holo-[ACP] + H(+). The enzyme catalyses octadecanoyl-[ACP] + H2O = octadecanoate + holo-[ACP] + H(+). It participates in lipid metabolism; fatty acid biosynthesis. With respect to regulation, cerulenin, a potent non-competitive pharmacological inhibitor of FAS, binds covalently to the active site of the condensing enzyme region, inactivating a key enzyme step in fatty acid synthesis. Fatty acid synthetase is a multifunctional enzyme that catalyzes the de novo biosynthesis of long-chain saturated fatty acids starting from acetyl-CoA and malonyl-CoA in the presence of NADPH. This multifunctional protein contains 7 catalytic activities and a site for the binding of the prosthetic group 4'-phosphopantetheine of the acyl carrier protein ([ACP]) domain. This is Fatty acid synthase (FASN) from Gallus gallus (Chicken).